Consider the following 577-residue polypeptide: ATP-dependent zinc metalloprotease FtsH (577 aa).

The Cytoplasmic segment spans residues 1 to 3 (MKK). Residues 4–24 (LYWIILIAVVLACSGILMSLH) traverse the membrane as a helical segment. At 25–98 (LSVTKEEMTY…IKVDNSDSYS (74 aa)) the chain is on the extracellular side. The helical transmembrane segment at 99-119 (ATKVIQIILIITVGTGVFLFI) threads the bilayer. At 120–577 (RTSGGKDKPL…IDRICLKEAV (458 aa)) the chain is on the cytoplasmic side. 186-193 (GPPGTGKT) contributes to the ATP binding site. His-409 contributes to the Zn(2+) binding site. Glu-410 is an active-site residue. Zn(2+)-binding residues include His-413 and Asp-487.

In the central section; belongs to the AAA ATPase family. The protein in the C-terminal section; belongs to the peptidase M41 family. In terms of assembly, homohexamer. Zn(2+) is required as a cofactor.

Its subcellular location is the cell membrane. Acts as a processive, ATP-dependent zinc metallopeptidase for both cytoplasmic and membrane proteins. Plays a role in the quality control of integral membrane proteins. This Lachnoclostridium phytofermentans (strain ATCC 700394 / DSM 18823 / ISDg) (Clostridium phytofermentans) protein is ATP-dependent zinc metalloprotease FtsH.